Reading from the N-terminus, the 48-residue chain is Light-harvesting protein B-870 beta chain (48 aa).

The Cytoplasmic portion of the chain corresponds to 2–21 (AERKGSISGLTDDEAQEFHK). Histidine 20 and histidine 38 together coordinate a bacteriochlorophyll. The helical transmembrane segment at 22–44 (FWVQGFVGFTAVAVVAHFLVWVW) threads the bilayer. The Periplasmic segment spans residues 45 to 48 (RPWL).

An alpha/beta heterodimer. The core complex is formed by different alpha and beta chains, binding bacteriochlorophyll molecules, and arranged most probably in tetrameric structures disposed around the reaction center. The non-pigmented gamma chains may constitute additional components.

It is found in the cell inner membrane. Functionally, antenna complexes are light-harvesting systems, which transfer the excitation energy to the reaction centers. The chain is Light-harvesting protein B-870 beta chain (pufB) from Rubrivivax gelatinosus (Rhodocyclus gelatinosus).